The primary structure comprises 426 residues: MAAIEAVNAREILDSRGNPTVEVEVLLEDGTFTRAAVPSGASTGAFEAYELRDGDAGRYLGKGVQKAVAAVVDEIGPAIQDLDAADQRIIDATMIELDGTENKSRLGANALLGVSLAVAKAAADSAELPLYRYLGGPNAHTLPVPMLNVINGGSHADTNVDIQEFMLLPVGASTFSEGLRWGVETYHALKSLLKKKGLSTGLGDEGGFAPNLDSNRAALDLLMEAIDAAGFTAGKQIALGLDVASSEFYSDGAYTFEGQKVDAAHLTAYFADLVASYPLITIEDPLDEDDWAGYDHFTAELGAKVQIVGDDLFVTNPKRLADGITRGVANSILVKVNQIGTLTETLDAVSLAQRSGYTTVLSHRSGETEDTTIADLAVAVDAGQIKTGAPARSERVAKYNQLLRIEQDLGAAAVYAGRSAFPRFQA.

Glutamine 163 contributes to the (2R)-2-phosphoglycerate binding site. Glutamate 205 acts as the Proton donor in catalysis. Mg(2+) contacts are provided by aspartate 242, glutamate 283, and aspartate 310. The (2R)-2-phosphoglycerate site is built by lysine 335, arginine 364, serine 365, and lysine 386. The active-site Proton acceptor is lysine 335.

The protein belongs to the enolase family. Mg(2+) serves as cofactor.

It is found in the cytoplasm. The protein resides in the secreted. Its subcellular location is the cell surface. It catalyses the reaction (2R)-2-phosphoglycerate = phosphoenolpyruvate + H2O. The protein operates within carbohydrate degradation; glycolysis; pyruvate from D-glyceraldehyde 3-phosphate: step 4/5. Its function is as follows. Catalyzes the reversible conversion of 2-phosphoglycerate (2-PG) into phosphoenolpyruvate (PEP). It is essential for the degradation of carbohydrates via glycolysis. This is Enolase from Clavibacter michiganensis subsp. michiganensis (strain NCPPB 382).